A 186-amino-acid polypeptide reads, in one-letter code: Large ribosomal subunit protein eL18 (186 aa).

It belongs to the eukaryotic ribosomal protein eL18 family. Component of the large ribosomal subunit. Mature ribosomes consist of a small (40S) and a large (60S) subunit. The 40S subunit contains about 32 different proteins and 1 molecule of RNA (18S). The 60S subunit contains 45 different proteins and 3 molecules of RNA (25S, 5.8S and 5S).

The protein localises to the cytoplasm. Component of the ribosome, a large ribonucleoprotein complex responsible for the synthesis of proteins in the cell. The small ribosomal subunit (SSU) binds messenger RNAs (mRNAs) and translates the encoded message by selecting cognate aminoacyl-transfer RNA (tRNA) molecules. The large subunit (LSU) contains the ribosomal catalytic site termed the peptidyl transferase center (PTC), which catalyzes the formation of peptide bonds, thereby polymerizing the amino acids delivered by tRNAs into a polypeptide chain. The nascent polypeptides leave the ribosome through a tunnel in the LSU and interact with protein factors that function in enzymatic processing, targeting, and the membrane insertion of nascent chains at the exit of the ribosomal tunnel. In Candida albicans (strain SC5314 / ATCC MYA-2876) (Yeast), this protein is Large ribosomal subunit protein eL18.